The sequence spans 154 residues: Ribosome maturation factor RimP (154 aa).

The protein belongs to the RimP family.

It localises to the cytoplasm. Its function is as follows. Required for maturation of 30S ribosomal subunits. The polypeptide is Ribosome maturation factor RimP (Clostridium perfringens (strain ATCC 13124 / DSM 756 / JCM 1290 / NCIMB 6125 / NCTC 8237 / Type A)).